The sequence spans 158 residues: Small ribosomal subunit protein uS9 (158 aa).

Belongs to the universal ribosomal protein uS9 family.

This is Small ribosomal subunit protein uS9 from Brucella melitensis biotype 2 (strain ATCC 23457).